Here is a 771-residue protein sequence, read N- to C-terminus: Rho GTPase-activating protein 26 (771 aa).

One can recognise a BAR domain in the interval 7–262 (EFSDCYLDSP…MKENPHEHLA (256 aa)). One can recognise a PH domain in the interval 265–369 (PFTMEGYLYV…WMEAMDGREP (105 aa)). Positions 383–568 (AQLDNIGFSI…IIIENYEEMF (186 aa)) constitute a Rho-GAP domain. The tract at residues 575–712 (PQTNSQLHLS…SSTSSDSSPV (138 aa)) is disordered. Residues 608-617 (HSSEKEEKRN) show a composition bias toward basic and acidic residues. The segment covering 618–637 (SVNSSAESVSSSNANSSVNS) has biased composition (low complexity). Polar residues-rich tracts occupy residues 638–650 (TCTQ…NLNA) and 662–671 (RPNSLLNPKN). Composition is skewed to low complexity over residues 673–683 (SGLLPSSLNPS) and 691–712 (PMVS…SSPV). The SH3 domain maps to 713–771 (SVPRKAKALYACKAEHDSELSFSAGTVFENVCPSQEPGWLEGTLNGKTGLIPENYVEFL).

It is found in the cell junction. Its subcellular location is the focal adhesion. It localises to the cytoplasm. The protein localises to the cytoskeleton. The protein resides in the endosome membrane. Functionally, GTPase-activating protein for rhoa and cdc42. May be involved in the regulation of neosynthesized protein export through a Rab-endososomal dependent export route. The protein is Rho GTPase-activating protein 26 (arhgap26) of Xenopus laevis (African clawed frog).